The sequence spans 83 residues: MALMQATHTIEGFLAVETHPRAFVAENGHVITRLSATKWGGWEGLEILEYSGDGQVEVSDEQLAEAEHASQIEAQIIAEAAAE.

The polypeptide is Gene 3 protein (3) (Mycobacterium (Mycobacteriophage D29)).